The primary structure comprises 145 residues: UPF0735 ACT domain-containing protein CPR_1404 (145 aa).

The 76-residue stretch at 69–144 folds into the ACT domain; that stretch reads IFNMVVTHEK…GVEKVEFVAM (76 aa).

This sequence belongs to the UPF0735 family.

The protein is UPF0735 ACT domain-containing protein CPR_1404 of Clostridium perfringens (strain SM101 / Type A).